A 232-amino-acid polypeptide reads, in one-letter code: Sugar fermentation stimulation protein homolog (232 aa).

It belongs to the SfsA family.

This is Sugar fermentation stimulation protein homolog from Moorella thermoacetica (strain ATCC 39073 / JCM 9320).